Here is a 166-residue protein sequence, read N- to C-terminus: Orotate phosphoribosyltransferase (166 aa).

Residues R83, K84, H89, and 109-117 each bind 5-phospho-alpha-D-ribose 1-diphosphate; that span reads DDVATTGGS. Orotate-binding residues include T113 and R141.

This sequence belongs to the purine/pyrimidine phosphoribosyltransferase family. PyrE subfamily. As to quaternary structure, homodimer. Mg(2+) serves as cofactor.

It carries out the reaction orotidine 5'-phosphate + diphosphate = orotate + 5-phospho-alpha-D-ribose 1-diphosphate. Its pathway is pyrimidine metabolism; UMP biosynthesis via de novo pathway; UMP from orotate: step 1/2. Catalyzes the transfer of a ribosyl phosphate group from 5-phosphoribose 1-diphosphate to orotate, leading to the formation of orotidine monophosphate (OMP). The protein is Orotate phosphoribosyltransferase of Picrophilus torridus (strain ATCC 700027 / DSM 9790 / JCM 10055 / NBRC 100828 / KAW 2/3).